The sequence spans 115 residues: Large ribosomal subunit protein bL20c (115 aa).

This sequence belongs to the bacterial ribosomal protein bL20 family.

Its subcellular location is the plastid. The protein resides in the chloroplast. In terms of biological role, binds directly to 23S ribosomal RNA and is necessary for the in vitro assembly process of the 50S ribosomal subunit. It is not involved in the protein synthesizing functions of that subunit. This Pyropia yezoensis (Susabi-nori) protein is Large ribosomal subunit protein bL20c.